Consider the following 887-residue polypeptide: Serine/threonine-protein kinase greatwall (887 aa).

Residues 32–843 (FGIVKPISRG…LKDLKAHPLF (812 aa)) form the Protein kinase domain. Residues 38 to 46 (ISRGAFGKV) and K61 each bind ATP. D155 (proton acceptor) is an active-site residue. A phosphothreonine; by CDK1; in vitro mark is found at T221 and T244. The segment at 321-353 (DAEAPPYFNSSRVKDSSSEQARSKKPTGSSASQ) is disordered. A Phosphoserine; by CDK1; in vitro modification is found at S363. Residues 410-435 (PKDFDKTGQGELGKFTSSPDSPPWLA) are disordered. S465 carries the post-translational modification Phosphoserine; by CDK1; in vitro. Residues 556–624 (RDGEVSSTSE…EITPDNKGIP (69 aa)) form a disordered region. The span at 575–587 (QDSSSTGMSVTEN) shows a compositional bias: polar residues. Residues 588-604 (QIDRDLSHVDKSIKELS) are compositionally biased toward basic and acidic residues. The segment covering 608 to 617 (SQSENSEEIT) has biased composition (acidic residues). Residues S654 and S677 each carry the phosphoserine; by CDK1; in vitro modification. Phosphothreonine; by CDK1 is present on T748. The region spanning 844–887 (HGMEWEELQYQPMSFIPQPDDETDTTYFEARNNAQHLKVSGFSL) is the AGC-kinase C-terminal domain.

Belongs to the protein kinase superfamily. AGC Ser/Thr protein kinase family. Interacts with arpp19 and ensa, leading to their phosphorylation. In terms of processing, phosphorylation at Thr-748 by CDK1 during M phase activates its kinase activity. Not active during other phases of the cell cycle. Has the ability to autophosphorylate.

It localises to the cytoplasm. It is found in the cytoskeleton. The protein resides in the microtubule organizing center. The protein localises to the centrosome. Its subcellular location is the nucleus. It carries out the reaction L-seryl-[protein] + ATP = O-phospho-L-seryl-[protein] + ADP + H(+). It catalyses the reaction L-threonyl-[protein] + ATP = O-phospho-L-threonyl-[protein] + ADP + H(+). In terms of biological role, serine/threonine kinase that plays a key role in M phase by acting as a regulator of mitosis entry and maintenance. Acts by promoting the inactivation of protein phosphatase 2A (PP2A) during M phase: does not directly inhibit PP2A but acts by mediating phosphorylation and subsequent activation of arpp19 and ensa at 'Ser-67', 2 phosphatase inhibitors that specifically inhibit the ppp2r2d (PR55-delta) subunit of PP2A. Inactivation of PP2A during M phase is essential to keep cyclin-B1-CDK1 activity high. Following DNA damage, it is also involved in checkpoint recovery by being inhibited. The polypeptide is Serine/threonine-protein kinase greatwall (mastl) (Xenopus laevis (African clawed frog)).